The sequence spans 878 residues: Protein argonaute 6 (878 aa).

The segment covering 1 to 17 (METSSSLPLSPISIEPE) has biased composition (low complexity). A disordered region spans residues 1–25 (METSSSLPLSPISIEPEQPSHRDYD). Residues 259-372 (PVIEFLKANQ…LPLEFCNLVS (114 aa)) enclose the PAZ domain. One can recognise a Piwi domain in the interval 541–851 (FILCILPERK…AAAQVAQFTK (311 aa)).

Belongs to the argonaute family. Ago subfamily. As to expression, expressed in roots, cotyledons and shoot meristematic region.

The protein localises to the nucleus. Functionally, involved in transcriptional gene silencing (TGS). Component of the RISC complex that associate with the small interfering RNA (siRNA) pathway involved in direct cytosine methylation at endogenous DNA repeats. Required for the accumulation of specific siRNAs derived from transgene and heterochromatin-related endogenous loci. Involved in RNA-directed DNA methylation (RdDM) at specific endogenous loci. Probably not required for the accumulation of siRNAs derived from transgene inverted repeats that induce post-transcriptional gene silencing (PTGS). Associates mainly with small RNAs of 24 nucleotide in length and preferentially recruits small RNAs with a 5' terminal adenosine. Targeted by turnip yellows virus (TuYV) protein P0 (via F-box-like domain) for probable proteasome degradation and thereby inactivating AGO6 function in RNA silencing. The polypeptide is Protein argonaute 6 (AGO6) (Arabidopsis thaliana (Mouse-ear cress)).